The following is a 493-amino-acid chain: 3-octaprenyl-4-hydroxybenzoate carboxy-lyase (493 aa).

Asn-172 lines the Mn(2+) pocket. Residues 175–177, 189–191, and 194–195 contribute to the prenylated FMN site; these read IYR, RWL, and RG. Residue Glu-238 coordinates Mn(2+). Asp-287 functions as the Proton donor in the catalytic mechanism.

It belongs to the UbiD family. As to quaternary structure, homohexamer. Prenylated FMN is required as a cofactor. Requires Mn(2+) as cofactor.

It localises to the cell membrane. It catalyses the reaction a 4-hydroxy-3-(all-trans-polyprenyl)benzoate + H(+) = a 2-(all-trans-polyprenyl)phenol + CO2. It functions in the pathway cofactor biosynthesis; ubiquinone biosynthesis. Functionally, catalyzes the decarboxylation of 3-octaprenyl-4-hydroxy benzoate to 2-octaprenylphenol, an intermediate step in ubiquinone biosynthesis. In Shewanella halifaxensis (strain HAW-EB4), this protein is 3-octaprenyl-4-hydroxybenzoate carboxy-lyase.